A 232-amino-acid chain; its full sequence is MAKKTKRALAIREKLEAGKVYTALEALQLLKEMPAAKFVESVDVAINLGVDPRKSDQVVRGAAVLPHGTGKTVRVAVFAQNDNADAAKAAGADIVGMEELADEIKAGRSDFDVVIAEPAAMRVVGQLGQILGPRGLMPNPKVGTVTADIKAAVENAKAGQVRFRADKSGIVHAMIGKIDFDAEKLLENLHALIAEINKLRPTTIKGVYMQKAYISTTMGPGIAVDVASLTNA.

Belongs to the universal ribosomal protein uL1 family. As to quaternary structure, part of the 50S ribosomal subunit.

Binds directly to 23S rRNA. The L1 stalk is quite mobile in the ribosome, and is involved in E site tRNA release. Functionally, protein L1 is also a translational repressor protein, it controls the translation of the L11 operon by binding to its mRNA. This is Large ribosomal subunit protein uL1 from Dichelobacter nodosus (strain VCS1703A).